The primary structure comprises 482 residues: Glycogen synthase 2 (482 aa).

K18 contributes to the ADP-alpha-D-glucose binding site.

It belongs to the glycosyltransferase 1 family. Bacterial/plant glycogen synthase subfamily.

It carries out the reaction [(1-&gt;4)-alpha-D-glucosyl](n) + ADP-alpha-D-glucose = [(1-&gt;4)-alpha-D-glucosyl](n+1) + ADP + H(+). Its pathway is glycan biosynthesis; glycogen biosynthesis. In terms of biological role, synthesizes alpha-1,4-glucan chains using ADP-glucose. The polypeptide is Glycogen synthase 2 (Bradyrhizobium diazoefficiens (strain JCM 10833 / BCRC 13528 / IAM 13628 / NBRC 14792 / USDA 110)).